Reading from the N-terminus, the 364-residue chain is Fructose-1,6-bisphosphatase class 1 2 (364 aa).

Mg(2+) is bound by residues Glu99, Asp121, Leu123, and Asp124. Substrate is bound by residues 124–127 and Asn220; that span reads DGSS. Glu292 provides a ligand contact to Mg(2+).

Belongs to the FBPase class 1 family. As to quaternary structure, homotetramer. Mg(2+) is required as a cofactor.

The protein resides in the cytoplasm. The enzyme catalyses beta-D-fructose 1,6-bisphosphate + H2O = beta-D-fructose 6-phosphate + phosphate. It participates in carbohydrate biosynthesis; gluconeogenesis. The polypeptide is Fructose-1,6-bisphosphatase class 1 2 (Polaromonas naphthalenivorans (strain CJ2)).